Reading from the N-terminus, the 316-residue chain is Probable cell division protein WhiA (316 aa).

Residues 276–309 (SLEELGKIAEPQITKDAIAGRIRRLLQLAEKTEK) constitute a DNA-binding region (H-T-H motif).

This sequence belongs to the WhiA family.

In terms of biological role, involved in cell division and chromosome segregation. The polypeptide is Probable cell division protein WhiA (Bifidobacterium longum (strain NCC 2705)).